We begin with the raw amino-acid sequence, 450 residues long: Folate synthesis bifunctional protein (450 aa).

Residues 1–166 form an HPPK region; the sequence is MTTWNFVCLG…TFAELAAIYP (166 aa). Residues 180-441 enclose the Pterin-binding domain; sequence TQIMGIVNVT…QVEGNRRVLA (262 aa). A DHPS region spans residues 182-450; it reads IMGIVNVTDD…AAAAWSGMPV (269 aa). Mg(2+) is bound at residue Asn-187. Residues Thr-227, Asp-267, Asn-287, Asp-358, Lys-395, and 429-431 each bind (7,8-dihydropterin-6-yl)methyl diphosphate; that span reads RVH.

It in the C-terminal section; belongs to the DHPS family. This sequence in the N-terminal section; belongs to the HPPK family. Requires Mg(2+) as cofactor.

It catalyses the reaction 6-hydroxymethyl-7,8-dihydropterin + ATP = (7,8-dihydropterin-6-yl)methyl diphosphate + AMP + H(+). It carries out the reaction (7,8-dihydropterin-6-yl)methyl diphosphate + 4-aminobenzoate = 7,8-dihydropteroate + diphosphate. It participates in cofactor biosynthesis; tetrahydrofolate biosynthesis; 2-amino-4-hydroxy-6-hydroxymethyl-7,8-dihydropteridine diphosphate from 7,8-dihydroneopterin triphosphate: step 4/4. Its pathway is cofactor biosynthesis; tetrahydrofolate biosynthesis; 7,8-dihydrofolate from 2-amino-4-hydroxy-6-hydroxymethyl-7,8-dihydropteridine diphosphate and 4-aminobenzoate: step 1/2. This Chlamydia muridarum (strain MoPn / Nigg) protein is Folate synthesis bifunctional protein (folKP).